A 385-amino-acid polypeptide reads, in one-letter code: Glutamate 5-kinase (385 aa).

Lysine 18 contacts ATP. Serine 57, aspartate 144, and asparagine 156 together coordinate substrate. Position 218–224 (218–224 (TGGMKSK)) interacts with ATP. Residues 283–361 (RGVLSIDAGA…SRIEQVLGHK (79 aa)) form the PUA domain.

This sequence belongs to the glutamate 5-kinase family.

Its subcellular location is the cytoplasm. It carries out the reaction L-glutamate + ATP = L-glutamyl 5-phosphate + ADP. Its pathway is amino-acid biosynthesis; L-proline biosynthesis; L-glutamate 5-semialdehyde from L-glutamate: step 1/2. Functionally, catalyzes the transfer of a phosphate group to glutamate to form L-glutamate 5-phosphate. This is Glutamate 5-kinase from Syntrophus aciditrophicus (strain SB).